The primary structure comprises 613 residues: MAIGVVKRNAGSSSDGTEDSDFSTDLEHTDSSESDGTSRRSARVTRSSARLSQSSQDSSPVRNLPSFGTEEPAYSTRRVTRSQQQPTPVTPKKYPLRQTRSSGSETEQVVDFSDRETKNTADHDESPPRTPTGNAPSSESDIDISSPNVSHDESIAKDMSLKDSGSDLSHRPKRRRFHESYNFNMKCPTPGCNSLGHLTGKHERHFSISGCPLYHNLSADECKVRAQSRDKQIEERMLSHRQDDNNRHATRHQAPTERQLRYKEKVAELRKKRNSGLSKEQKEKYMEHRQTYGNTREPLLENLTSEYDLDLFRRAQARASEDLEKLRLQGQITEGSNMIKTIAFGRYELDTWYHSPYPEEYARLGRLYMCEFCLKYMKSQTILRRHMAKCVWKHPPGDEIYRKGSISVFEVDGKKNKIYCQNLCLLAKLFLDHKTLYYDVEPFLFYVMTEADNTGCHLIGYFSKEKNSFLNYNVSCILTMPQYMRQGYGKMLIDFSYLLSKVEEKVGSPERPLSDLGLISYRSYWKEVLLRYLHNFQGKEISIKEISQETAVNPVDIVSTLQALQMLKYWKGKHLVLKRQDLIDEWIAKEAKRSNSNKTMDPSCLKWTPPKGT.

The tract at residues 1–175 (MAIGVVKRNA…SDLSHRPKRR (175 aa)) is disordered. Phosphoserine is present on residues serine 12, serine 52, serine 55, serine 59, and serine 66. Positions 44-59 (VTRSSARLSQSSQDSS) are enriched in low complexity. Phosphothreonine occurs at positions 87 and 90. A compositionally biased stretch (polar residues) spans 98-107 (QTRSSGSETE). A Phosphoserine modification is found at serine 104. Threonine 106 carries the post-translational modification Phosphothreonine. The span at 112-127 (FSDRETKNTADHDESP) shows a compositional bias: basic and acidic residues. 2 positions are modified to phosphoserine: serine 113 and serine 126. Phosphothreonine is present on threonine 130. Positions 136-147 (PSSESDIDISSP) are enriched in low complexity. The segment covering 150–170 (SHDESIAKDMSLKDSGSDLSH) has biased composition (basic and acidic residues). Residues serine 160, serine 164, serine 166, and serine 180 each carry the phosphoserine modification. The CCHHC-type zinc finger occupies 178-221 (HESYNFNMKCPTPGCNSLGHLTGKHERHFSISGCPLYHNLSADE). Residues lysine 201 and lysine 279 each carry the N6-acetyllysine modification. A Glycyl lysine isopeptide (Lys-Gly) (interchain with G-Cter in SUMO2) cross-link involves residue lysine 325. The MYST-type HAT domain maps to 334-609 (EGSNMIKTIA…MDPSCLKWTP (276 aa)). A Glycyl lysine isopeptide (Lys-Gly) (interchain with G-Cter in ubiquitin) cross-link involves residue lysine 340. The C2HC MYST-type zinc-finger motif lies at 367–392 (LYMCEFCLKYMKSQTILRRHMAKCVW). 4 residues coordinate Zn(2+): cysteine 370, cysteine 373, histidine 386, and cysteine 390. Lysine 434 bears the N6-acetyllysine; by autocatalysis mark. Residues 477 to 479 (ILT) and 485 to 490 (RQGYGK) contribute to the acetyl-CoA site. Phosphoserine is present on serine 508. Glutamate 510 functions as the Proton donor/acceptor in the catalytic mechanism. Positions 514 and 523 each coordinate acetyl-CoA.

This sequence belongs to the MYST (SAS/MOZ) family. Component of the HBO1 complex composed of KAT7/HBO1, MEAF6, ING4 or ING5, and one scaffold subunit: complexes containing BRPF scaffold (BRPF1, BRD1/BRPF2 or BRPF3) direct KAT7/HBO1 specificity towards H3K14ac, while complexes containing JADE scaffold (JADE1, JADE2 and JADE3) mediate acetylation of histone H4. Interacts with MCM2 and ORC1. Interacts with the androgen receptor (AR) in the presence of dihydrotestosterone. Interacts with CDT1. Interacts with MAP2K1 and CUL1. Interacts with p53/TP53; leading to inhibit histone acetyltransferase activity. Phosphorylated at Ser-52 and Ser-55 by ATR in response to DNA damage, promoting its ubiquitination by the CRL4(DDB2) complex and subsequent degradation. Phosphorylation at Ser-52 and Ser-55 by ATR in response to ultraviolet-induced DNA, promotes localization to DNA damage sites. Phosphorylation at Ser-59 by PLK1 during mitosis seems important for prereplicative complex formation and DNA replication licensing, and requires prior phosphorylation at Thr-87 and Thr-90 by CDK1. Phosphorylated by MAP2K1, which accelerates its degradation. Post-translationally, ubiquitinated at Lys-340, leading to proteasomal degradation. Ubiquitinated by the CRL4(DDB2) complex following phosphorylation by ATR, leading to its subsequent degradation. In terms of processing, autoacetylation at Lys-434 is required for proper function. Widely expressed in adult tissues.

The protein resides in the nucleus. Its subcellular location is the chromosome. It localises to the centromere. It is found in the cytoplasm. The protein localises to the cytosol. The catalysed reaction is L-lysyl-[protein] + acetyl-CoA = N(6)-acetyl-L-lysyl-[protein] + CoA + H(+). Histone acetyltransferase activity is inhibited by GMNN in the context of a complex with CDT1, inhibiting histone H4 acetylation and DNA replication licensing. Functionally, catalytic subunit of histone acetyltransferase HBO1 complexes, which specifically mediate acetylation of histone H3 at 'Lys-14' (H3K14ac), thereby regulating various processes, such as gene transcription, protein ubiquitination, immune regulation, stem cell pluripotent and self-renewal maintenance and embryonic development. Some complexes also catalyze acetylation of histone H4 at 'Lys-5', 'Lys-8' and 'Lys-12' (H4K5ac, H4K8ac and H4K12ac, respectively), regulating DNA replication initiation, regulating DNA replication initiation. Specificity of the HBO1 complexes is determined by the scaffold subunit: complexes containing BRPF scaffold (BRPF1, BRD1/BRPF2 or BRPF3) direct KAT7/HBO1 specificity towards H3K14ac, while complexes containing JADE (JADE1, JADE2 and JADE3) scaffold direct KAT7/HBO1 specificity towards histone H4. H3K14ac promotes transcriptional elongation by facilitating the processivity of RNA polymerase II. Acts as a key regulator of hematopoiesis by forming a complex with BRD1/BRPF2, directing KAT7/HBO1 specificity towards H3K14ac and promoting erythroid differentiation. H3K14ac is also required for T-cell development. KAT7/HBO1-mediated acetylation facilitates two consecutive steps, licensing and activation, in DNA replication initiation: H3K14ac facilitates the activation of replication origins, and histone H4 acetylation (H4K5ac, H4K8ac and H4K12ac) facilitates chromatin loading of MCM complexes, promoting DNA replication licensing. Acts as a positive regulator of centromeric CENPA assembly: recruited to centromeres and mediates histone acetylation, thereby preventing centromere inactivation mediated by SUV39H1, possibly by increasing histone turnover/exchange. Involved in nucleotide excision repair: phosphorylation by ATR in response to ultraviolet irradiation promotes its localization to DNA damage sites, where it mediates histone acetylation to facilitate recruitment of XPC at the damaged DNA sites. Acts as an inhibitor of NF-kappa-B independently of its histone acetyltransferase activity. In terms of biological role, plays a central role in the maintenance of leukemia stem cells in acute myeloid leukemia (AML). Acts by mediating acetylation of histone H3 at 'Lys-14' (H3K14ac), thereby facilitating the processivity of RNA polymerase II to maintain the high expression of key genes, such as HOXA9 and HOXA10 that help to sustain the functional properties of leukemia stem cells. The sequence is that of Histone acetyltransferase KAT7 from Mus musculus (Mouse).